The following is a 249-amino-acid chain: Thrombin-like enzyme barnettobin (249 aa).

An N-terminal signal peptide occupies residues 1 to 10; the sequence is APKELQVSYA. A propeptide spanning residues 11 to 16 is cleaved from the precursor; that stretch reads HKSSEL. The region spanning 17–240 is the Peptidase S1 domain; sequence VIGGDECDIN…YPPWIQSIIA (224 aa). 6 disulfides stabilise this stretch: Cys-23–Cys-154, Cys-41–Cys-57, Cys-89–Cys-247, Cys-133–Cys-201, Cys-165–Cys-180, and Cys-191–Cys-216. Residues His-56 and Asp-101 each act as charge relay system in the active site. N-linked (GlcNAc...) asparagine glycosylation is found at Asn-145 and Asn-161. Ser-195 serves as the catalytic Charge relay system. Asn-242 carries an N-linked (GlcNAc...) asparagine glycan.

This sequence belongs to the peptidase S1 family. Snake venom subfamily. In terms of assembly, monomer. Post-translationally, glycoprotein, contains approx. 52% carbohydrate which could be removed by N-glycosidase. Glycosylation is important, since deglycosylated barnettobin loses its clotting and defibrinogenating effects. Expressed by the venom gland.

The protein resides in the secreted. Both coagulant and amidolytic activities are inhibited by PMSF. Amidolytic activity is partially inhibited by DTT, chymostatin, SBTI and TLCK, but not by heparin and EDTA. In terms of biological role, thrombin-like snake venom serine protease that releases only fibrinopeptide A from human Aalpha chain of fibrinogen (specific coagulant activity was 251.7 NIH thrombin units/mg). Also shows fibrino(geno)lytic activities in vitro and defibrinogenating effects in vivo. This chain is Thrombin-like enzyme barnettobin, found in Bothrops barnetti (Barnett's lancehead).